A 328-amino-acid polypeptide reads, in one-letter code: Peroxisomal adenine nucleotide transporter 1 (328 aa).

6 helical membrane passes run 1-21 (MLTLESALTGAVASAMANIAV), 78-98 (TVTTVATFVQNFVYFFWYTFI), 128-148 (LVLGVAAASISQLFTSPMAVV), 185-202 (LRTGLALTINPSITYASF), 226-246 (FILGVLSKMISTLVTQPLIVA), and 277-297 (WKGVLPQLTKGVIVQGLLFAF). 3 Solcar repeats span residues 1–101 (MLTL…IRKS), 122–208 (PSTI…LKEV), and 220–304 (LSAV…LTKS).

Belongs to the mitochondrial carrier (TC 2.A.29) family.

It is found in the peroxisome membrane. Adenine nucleotide transporter involved in the uniport of ATP and adenine nucleotide hetero-exchange transport between the cytosol and the peroxisomal lumen. This transport is accompanied by a proton transport from the peroxisomal lumen to the cytosol. Transport of ATP into the peroxisome is required for beta-oxidation of medium-chain fatty acids. Required for growth on medium-chain fatty acids, pH gradient formation in peroxisomes and for normal peroxisome proliferation. This Saccharomyces cerevisiae (strain ATCC 204508 / S288c) (Baker's yeast) protein is Peroxisomal adenine nucleotide transporter 1 (ANT1).